A 253-amino-acid polypeptide reads, in one-letter code: Imidazole glycerol phosphate synthase subunit HisF (253 aa).

Catalysis depends on residues Asp-11 and Asp-130.

It belongs to the HisA/HisF family. As to quaternary structure, heterodimer of HisH and HisF.

The protein resides in the cytoplasm. The enzyme catalyses 5-[(5-phospho-1-deoxy-D-ribulos-1-ylimino)methylamino]-1-(5-phospho-beta-D-ribosyl)imidazole-4-carboxamide + L-glutamine = D-erythro-1-(imidazol-4-yl)glycerol 3-phosphate + 5-amino-1-(5-phospho-beta-D-ribosyl)imidazole-4-carboxamide + L-glutamate + H(+). Its pathway is amino-acid biosynthesis; L-histidine biosynthesis; L-histidine from 5-phospho-alpha-D-ribose 1-diphosphate: step 5/9. Its function is as follows. IGPS catalyzes the conversion of PRFAR and glutamine to IGP, AICAR and glutamate. The HisF subunit catalyzes the cyclization activity that produces IGP and AICAR from PRFAR using the ammonia provided by the HisH subunit. This chain is Imidazole glycerol phosphate synthase subunit HisF, found in Thermotoga sp. (strain RQ2).